The sequence spans 230 residues: Voltage-gated hydrogen channel 1 (230 aa).

The Cytoplasmic portion of the chain corresponds to 1–58 (MAGCLRHFTSVGDDTKKREWKQEDVEVAYEEPLKNTPHPFIASYSFRGALKWLLSSHK). The helical transmembrane segment at 59 to 79 (FQIVIICLVILDALFVLVEVL) threads the bilayer. At 80 to 96 (LDLELLAEKVDHIIPEI) the chain is on the extracellular side. A helical transmembrane segment spans residues 97–119 (FHYLSISVLTFFILEIAGKLYAF). At 120 to 127 (RLEFFHHK) the chain is on the cytoplasmic side. The helical transmembrane segment at 128-148 (FEVFDAAIVVISFIIDIVYIS) threads the bilayer. The Extracellular segment spans residues 149-155 (REDIFNA). The helical transmembrane segment at 156–176 (VGLLILLRLWRVARIVNGVIV) threads the bilayer. Residues 177 to 230 (SVKTRAEEKMHKLKEQKGSLLEKVAQLEQQCAQQEQEIGRLHKLLQEHNVFPAS) are Cytoplasmic-facing. Residues 178–225 (VKTRAEEKMHKLKEQKGSLLEKVAQLEQQCAQQEQEIGRLHKLLQEHN) are a coiled coil.

Belongs to the hydrogen channel family. Homodimer.

The protein resides in the membrane. Its subcellular location is the cell membrane. Mediates the voltage-dependent proton permeability of excitable membranes. Forms a proton-selective channel through which protons may pass in accordance with their electrochemical gradient. The chain is Voltage-gated hydrogen channel 1 (hvcn1) from Xenopus laevis (African clawed frog).